Consider the following 215-residue polypeptide: Protein FAM27D1 (215 aa).

The tract at residues 74-172 is disordered; the sequence is QPKTHTHTGM…RGTQADLSSR (99 aa). Basic and acidic residues predominate over residues 87-108; that stretch reads THRERERNTQRLRDRERRENGR. Residues 109–122 are compositionally biased toward basic residues; sequence HTHRHTHTLTHTHT. 2 stretches are compositionally biased toward basic and acidic residues: residues 123 to 139 and 149 to 162; these read HRDT…ETHT and SAHD…REQP. Residues 163–172 show a composition bias toward polar residues; it reads RGTQADLSSR.

Belongs to the FAM27 family.

The sequence is that of Protein FAM27D1 (FAM27D1) from Homo sapiens (Human).